A 348-amino-acid chain; its full sequence is Histidinol-phosphate aminotransferase (348 aa).

K211 is subject to N6-(pyridoxal phosphate)lysine.

It belongs to the class-II pyridoxal-phosphate-dependent aminotransferase family. Histidinol-phosphate aminotransferase subfamily. Homodimer. It depends on pyridoxal 5'-phosphate as a cofactor.

The catalysed reaction is L-histidinol phosphate + 2-oxoglutarate = 3-(imidazol-4-yl)-2-oxopropyl phosphate + L-glutamate. Its pathway is amino-acid biosynthesis; L-histidine biosynthesis; L-histidine from 5-phospho-alpha-D-ribose 1-diphosphate: step 7/9. The protein is Histidinol-phosphate aminotransferase of Chlorobaculum tepidum (strain ATCC 49652 / DSM 12025 / NBRC 103806 / TLS) (Chlorobium tepidum).